The following is a 530-amino-acid chain: T-complex protein 1 subunit gamma (530 aa).

The protein belongs to the TCP-1 chaperonin family. In terms of assembly, heterooligomeric complex of about 850 to 900 kDa that forms two stacked rings, 12 to 16 nm in diameter.

It is found in the cytoplasm. Molecular chaperone; assists the folding of proteins upon ATP hydrolysis. Known to play a role, in vitro, in the folding of actin and tubulin. This is T-complex protein 1 subunit gamma (cct3) from Dictyostelium discoideum (Social amoeba).